The chain runs to 364 residues: Dihydroflavonol 4-reductase (364 aa).

Lysine 45 and tyrosine 164 together coordinate NADP(+).

The protein belongs to the NAD(P)-dependent epimerase/dehydratase family. Dihydroflavonol-4-reductase subfamily.

The enzyme catalyses a (2R,3S,4S)-leucoanthocyanidin + NADP(+) = a (2R,3R)-dihydroflavonol + NADPH + H(+). It catalyses the reaction (2S)-flavan-4-ol + NADP(+) = (2S)-flavanone + NADPH + H(+). It functions in the pathway pigment biosynthesis; anthocyanin biosynthesis. Its function is as follows. Bifunctional enzyme involved in flavonoid metabolism. This Callistephus chinensis (China aster) protein is Dihydroflavonol 4-reductase (F).